The following is a 61-amino-acid chain: Large ribosomal subunit protein bL32 (61 aa).

Over residues 1–16 (MAVPKRKTSPSKRGMR) the composition is skewed to basic residues. The tract at residues 1 to 40 (MAVPKRKTSPSKRGMRRSADALKAPTYIEDKNSGELRRPH) is disordered. Basic and acidic residues predominate over residues 28 to 40 (IEDKNSGELRRPH).

The protein belongs to the bacterial ribosomal protein bL32 family.

The chain is Large ribosomal subunit protein bL32 from Sinorhizobium medicae (strain WSM419) (Ensifer medicae).